The chain runs to 528 residues: Bifunctional purine biosynthesis protein PurH (528 aa).

The 146-residue stretch at 1 to 146 folds into the MGS-like domain; the sequence is MAPTALLSVS…KNHDHVAVLT (146 aa).

This sequence belongs to the PurH family.

It catalyses the reaction (6R)-10-formyltetrahydrofolate + 5-amino-1-(5-phospho-beta-D-ribosyl)imidazole-4-carboxamide = 5-formamido-1-(5-phospho-D-ribosyl)imidazole-4-carboxamide + (6S)-5,6,7,8-tetrahydrofolate. It carries out the reaction IMP + H2O = 5-formamido-1-(5-phospho-D-ribosyl)imidazole-4-carboxamide. The protein operates within purine metabolism; IMP biosynthesis via de novo pathway; 5-formamido-1-(5-phospho-D-ribosyl)imidazole-4-carboxamide from 5-amino-1-(5-phospho-D-ribosyl)imidazole-4-carboxamide (10-formyl THF route): step 1/1. Its pathway is purine metabolism; IMP biosynthesis via de novo pathway; IMP from 5-formamido-1-(5-phospho-D-ribosyl)imidazole-4-carboxamide: step 1/1. In Synechococcus sp. (strain WH7803), this protein is Bifunctional purine biosynthesis protein PurH.